We begin with the raw amino-acid sequence, 72 residues long: Translation initiation factor IF-1 (72 aa).

Residues M1–K72 form the S1-like domain.

It belongs to the IF-1 family. As to quaternary structure, component of the 30S ribosomal translation pre-initiation complex which assembles on the 30S ribosome in the order IF-2 and IF-3, IF-1 and N-formylmethionyl-tRNA(fMet); mRNA recruitment can occur at any time during PIC assembly.

It localises to the cytoplasm. In terms of biological role, one of the essential components for the initiation of protein synthesis. Stabilizes the binding of IF-2 and IF-3 on the 30S subunit to which N-formylmethionyl-tRNA(fMet) subsequently binds. Helps modulate mRNA selection, yielding the 30S pre-initiation complex (PIC). Upon addition of the 50S ribosomal subunit IF-1, IF-2 and IF-3 are released leaving the mature 70S translation initiation complex. This is Translation initiation factor IF-1 from Myxococcus xanthus (strain DK1622).